The following is a 980-amino-acid chain: MALAVLRVLEPFPTETPPLAVLLPPGGPWPAAELGLVLALRPAGESPAGPALLVAALEGPDAGTEEQGPGPPQLLVSRALLRLLALGSGAWVRARAVRRPPALGWALLGTSLGPGLGPRVGPLLVRRGETLPVPGPRVLETRPALQGLLGPGTRLAVTELRGRARLCPESGDSSRPPPPPVVSSFAVSGTVRRLQGVLGGTGDSLGVSRSCLRGLGLFQGEWVWVAQARESSNTSQPHLARVQVLEPRWDLSDRLGPGSGPLGEPLADGLALVPATLAFNLGCDPLEMGELRIQRYLEGSIAPEDKGSCSLLPGPPFARELHIEIVSSPHYSTNGNYDGVLYRHFQIPRVVQEGDVLCVPTIGQVEILEGSPEKLPRWREMFFKVKKTVGEAPDGPASAYLADTTHTSLYMVGSTLSPVPWLPSEESTLWSSLSPPGLEALVSELCAVLKPRLQPGGALLTGTSSVLLRGPPGCGKTTVVAAACSHLGLHLLKVPCSSLCAESSGAVETKLQAIFSRARRCRPAVLLLTAVDLLGRDRDGLGEDARVMAVLRHLLLNEDPLNSCPPLMVVATTSRAQDLPADVQTAFPHELEVPALSEGQRLSILRALTAHLPLGQEVNLAQLARRCAGFVVGDLYALLTHSSRAACTRIKNSGLAGGLTEEDEGELCAAGFPLLAEDFGQALEQLQTAHSQAVGAPKIPSVSWHDVGGLQEVKKEILETIQLPLEHPELLSLGLRRSGLLLHGPPGTGKTLLAKAVATECSLTFLSVKGPELINMYVGQSEENVREVFARARAAAPCIIFFDELDSLAPSRGRSGDSGGVMDRVVSQLLAELDGLHSTQDVFVIGATNRPDLLDPALLRPGRFDKLVFVGANEDRASQLRVLSAITRKFKLEPSVSLVNVLDCCPPQLTGADLYSLCSDAMTAALKRRVHDLEEGLEPGSSALMLTMEDLLQAAARLQPSVSEQELLRYKRIQRKFAAC.

R119 is subject to Omega-N-methylarginine. ATP-binding positions include 470-477 (GPPGCGKT) and 744-751 (GPPGTGKT).

This sequence belongs to the AAA ATPase family. In terms of assembly, interacts with PEX1; forming the PEX1-PEX6 AAA ATPase complex, which is composed of a heterohexamer formed by a trimer of PEX1-PEX6 dimers. Interacts with PEX26; interaction is direct and promotes recruitment to peroxisomal membranes. Interacts with ZFAND6. As to expression, expressed in the retina, at higher levels in the photoreceptor layer at the joint between the outer and inner segments.

Its subcellular location is the cytoplasm. The protein localises to the cytosol. It localises to the peroxisome membrane. The protein resides in the cell projection. It is found in the cilium. Its subcellular location is the photoreceptor outer segment. It catalyses the reaction ATP + H2O = ADP + phosphate + H(+). Component of the PEX1-PEX6 AAA ATPase complex, a protein dislocase complex that mediates the ATP-dependent extraction of the PEX5 receptor from peroxisomal membranes, an essential step for PEX5 recycling. Specifically recognizes PEX5 monoubiquitinated at 'Cys-11', and pulls it out of the peroxisome lumen through the PEX2-PEX10-PEX12 retrotranslocation channel. Extraction by the PEX1-PEX6 AAA ATPase complex is accompanied by unfolding of the TPR repeats and release of bound cargo from PEX5. This chain is Peroxisomal ATPase PEX6, found in Homo sapiens (Human).